The primary structure comprises 257 residues: 5'-nucleotidase SurE (257 aa).

A divalent metal cation is bound by residues Asp-13, Asp-14, Ser-44, and Asn-100.

The protein belongs to the SurE nucleotidase family. A divalent metal cation serves as cofactor.

Its subcellular location is the cytoplasm. It carries out the reaction a ribonucleoside 5'-phosphate + H2O = a ribonucleoside + phosphate. Nucleotidase that shows phosphatase activity on nucleoside 5'-monophosphates. The chain is 5'-nucleotidase SurE from Phocaeicola vulgatus (strain ATCC 8482 / DSM 1447 / JCM 5826 / CCUG 4940 / NBRC 14291 / NCTC 11154) (Bacteroides vulgatus).